The chain runs to 198 residues: Protein GrpE (198 aa).

The protein belongs to the GrpE family. Homodimer.

It localises to the cytoplasm. Its function is as follows. Participates actively in the response to hyperosmotic and heat shock by preventing the aggregation of stress-denatured proteins, in association with DnaK and GrpE. It is the nucleotide exchange factor for DnaK and may function as a thermosensor. Unfolded proteins bind initially to DnaJ; upon interaction with the DnaJ-bound protein, DnaK hydrolyzes its bound ATP, resulting in the formation of a stable complex. GrpE releases ADP from DnaK; ATP binding to DnaK triggers the release of the substrate protein, thus completing the reaction cycle. Several rounds of ATP-dependent interactions between DnaJ, DnaK and GrpE are required for fully efficient folding. This Actinobacillus pleuropneumoniae serotype 3 (strain JL03) protein is Protein GrpE.